The following is a 584-amino-acid chain: Arginine--tRNA ligase (584 aa).

Positions 126–136 match the 'HIGH' region motif; sequence PNIAKEMHVGH.

The protein belongs to the class-I aminoacyl-tRNA synthetase family. In terms of assembly, monomer.

The protein localises to the cytoplasm. The catalysed reaction is tRNA(Arg) + L-arginine + ATP = L-arginyl-tRNA(Arg) + AMP + diphosphate. The chain is Arginine--tRNA ligase from Nostoc punctiforme (strain ATCC 29133 / PCC 73102).